Reading from the N-terminus, the 362-residue chain is Peptide chain release factor 1 (362 aa).

Q235 carries the post-translational modification N5-methylglutamine.

This sequence belongs to the prokaryotic/mitochondrial release factor family. Methylated by PrmC. Methylation increases the termination efficiency of RF1.

It localises to the cytoplasm. In terms of biological role, peptide chain release factor 1 directs the termination of translation in response to the peptide chain termination codons UAG and UAA. The protein is Peptide chain release factor 1 of Acinetobacter baumannii (strain AYE).